The following is a 135-amino-acid chain: Small ribosomal subunit protein uS11 (135 aa).

Over residues 1–10 the composition is skewed to polar residues; that stretch reads MPPKSRTATA. Disordered stretches follow at residues 1–27 and 114–135; these read MPPKSRTATASRKPRRKEKKNVAHGHA and GAIQDVTPSPHNGCRPPKRRRV. Basic residues predominate over residues 12 to 27; sequence RKPRRKEKKNVAHGHA.

This sequence belongs to the universal ribosomal protein uS11 family. As to quaternary structure, part of the 30S ribosomal subunit. Interacts with proteins S7 and S18. Binds to IF-3.

In terms of biological role, located on the platform of the 30S subunit, it bridges several disparate RNA helices of the 16S rRNA. Forms part of the Shine-Dalgarno cleft in the 70S ribosome. The protein is Small ribosomal subunit protein uS11 of Kineococcus radiotolerans (strain ATCC BAA-149 / DSM 14245 / SRS30216).